We begin with the raw amino-acid sequence, 332 residues long: D-galactose/methyl-galactoside binding periplasmic protein MglB (332 aa).

An N-terminal signal peptide occupies residues 1-23 (MNKKVLTLSAVMASMLFGAAAHA). Beta-D-galactose is bound by residues Asp37 and Asn114. Asp37 and Asn114 together coordinate beta-D-glucose. Asp157, Asn159, Asp161, Gln163, and Gln165 together coordinate Ca(2+). 3 residues coordinate beta-D-galactose: His175, Asp177, and Arg181. The beta-D-glucose site is built by His175, Asp177, and Arg181. Glu228 is a Ca(2+) binding site. Beta-D-galactose is bound by residues Asn234, Asp259, and Asn279. Beta-D-glucose contacts are provided by Asn234, Asp259, and Asn279.

Belongs to the bacterial solute-binding protein 2 family. As to quaternary structure, the ABC transporter complex is composed of one ATP-binding protein (MglA), two transmembrane proteins (MglC) and a solute-binding protein (MglB).

The protein localises to the periplasm. Its function is as follows. Part of the ABC transporter complex MglABC involved in galactose/methyl galactoside import. In addition, binds D-galactose and D-glucose and plays a role in the chemotaxis towards these two sugars by interacting with the Trg chemoreceptor. The chain is D-galactose/methyl-galactoside binding periplasmic protein MglB (mglB) from Escherichia coli O6:H1 (strain CFT073 / ATCC 700928 / UPEC).